A 109-amino-acid chain; its full sequence is uncharacterized protein (109 aa).

This is an uncharacterized protein from Saccharomyces cerevisiae (strain ATCC 204508 / S288c) (Baker's yeast).